Consider the following 66-residue polypeptide: Prokaryotic ubiquitin-like protein Pup (66 aa).

The span at 1–10 shows a compositional bias: low complexity; that stretch reads MAGQEQQSSS. A disordered region spans residues 1–39; that stretch reads MAGQEQQSSSPREEEHEVADAPVPVPSSPQASAHTDGVD. The interval 23–60 is ARC ATPase binding; sequence VPVPSSPQASAHTDGVDDLLDEIDGVLESNAEEFVRGF. A Deamidated glutamine modification is found at Gln-66. Gln-66 is covalently cross-linked (Isoglutamyl lysine isopeptide (Gln-Lys) (interchain with K-? in acceptor proteins)).

This sequence belongs to the prokaryotic ubiquitin-like protein family. Strongly interacts with the proteasome-associated ATPase ARC through a hydrophobic interface; the interacting region of Pup lies in its C-terminal half. There is one Pup binding site per ARC hexamer ring. Is modified by deamidation of its C-terminal glutamine to glutamate by the deamidase Dop, a prerequisite to the subsequent pupylation process.

The protein operates within protein degradation; proteasomal Pup-dependent pathway. Its function is as follows. Protein modifier that is covalently attached to lysine residues of substrate proteins, thereby targeting them for proteasomal degradation. The tagging system is termed pupylation. The polypeptide is Prokaryotic ubiquitin-like protein Pup (Renibacterium salmoninarum (strain ATCC 33209 / DSM 20767 / JCM 11484 / NBRC 15589 / NCIMB 2235)).